The sequence spans 259 residues: S-methyl-5'-thioadenosine phosphorylase (259 aa).

Phosphate-binding positions include Ser9 and 50-51 (RH). Met175 contributes to the substrate binding site. Thr176 contributes to the phosphate binding site. Residue 199–201 (DLD) coordinates substrate.

This sequence belongs to the PNP/MTAP phosphorylase family. MTAP subfamily. In terms of assembly, homohexamer. Dimer of a homotrimer.

The catalysed reaction is S-methyl-5'-thioadenosine + phosphate = 5-(methylsulfanyl)-alpha-D-ribose 1-phosphate + adenine. It participates in amino-acid biosynthesis; L-methionine biosynthesis via salvage pathway; S-methyl-5-thio-alpha-D-ribose 1-phosphate from S-methyl-5'-thioadenosine (phosphorylase route): step 1/1. Functionally, catalyzes the reversible phosphorylation of S-methyl-5'-thioadenosine (MTA) to adenine and 5-methylthioribose-1-phosphate. Involved in the breakdown of MTA, a major by-product of polyamine biosynthesis. Responsible for the first step in the methionine salvage pathway after MTA has been generated from S-adenosylmethionine. Has broad substrate specificity with 6-aminopurine nucleosides as preferred substrates. The protein is S-methyl-5'-thioadenosine phosphorylase of Mycolicibacterium smegmatis (strain ATCC 700084 / mc(2)155) (Mycobacterium smegmatis).